The sequence spans 347 residues: NADH-ubiquinone oxidoreductase chain 2 (347 aa).

Transmembrane regions (helical) follow at residues 3–23 (PLIF…TMIS), 26–46 (WLLI…IIMM), 67–87 (SMLL…WTIM), 96–116 (YMMT…FWVP), 149–169 (LNLN…GWGG), 178–198 (IMAY…MYNT), 200–220 (LMML…ALFI), 239–259 (ILTT…PLSG), 274–294 (NMLL…YFYM), and 325–345 (LSPT…MMLI).

This sequence belongs to the complex I subunit 2 family. As to quaternary structure, core subunit of respiratory chain NADH dehydrogenase (Complex I) which is composed of 45 different subunits. Interacts with TMEM242.

The protein resides in the mitochondrion inner membrane. The enzyme catalyses a ubiquinone + NADH + 5 H(+)(in) = a ubiquinol + NAD(+) + 4 H(+)(out). In terms of biological role, core subunit of the mitochondrial membrane respiratory chain NADH dehydrogenase (Complex I) which catalyzes electron transfer from NADH through the respiratory chain, using ubiquinone as an electron acceptor. Essential for the catalytic activity and assembly of complex I. The chain is NADH-ubiquinone oxidoreductase chain 2 from Dasypus novemcinctus (Nine-banded armadillo).